The following is a 1061-amino-acid chain: RecBCD enzyme subunit RecC (1061 aa).

The protein belongs to the RecC family. As to quaternary structure, heterotrimer of RecB, RecC and RecD. All subunits contribute to DNA-binding.

A helicase/nuclease that prepares dsDNA breaks (DSB) for recombinational DNA repair. Binds to DSBs and unwinds DNA via a highly rapid and processive ATP-dependent bidirectional helicase activity. Unwinds dsDNA until it encounters a Chi (crossover hotspot instigator) sequence from the 3' direction. Cuts ssDNA a few nucleotides 3' to the Chi site. The properties and activities of the enzyme are changed at Chi. The Chi-altered holoenzyme produces a long 3'-ssDNA overhang and facilitates RecA-binding to the ssDNA for homologous DNA recombination and repair. Holoenzyme degrades any linearized DNA that is unable to undergo homologous recombination. In the holoenzyme this subunit recognizes the wild-type Chi sequence, and when added to isolated RecB increases its ATP-dependent helicase processivity. The polypeptide is RecBCD enzyme subunit RecC (Buchnera aphidicola subsp. Schizaphis graminum (strain Sg)).